Here is a 365-residue protein sequence, read N- to C-terminus: Inositol 4-methyltransferase (365 aa).

Aspartate 232 serves as a coordination point for S-adenosyl-L-methionine. Residue histidine 270 is the Proton acceptor of the active site.

Belongs to the class I-like SAM-binding methyltransferase superfamily. Cation-independent O-methyltransferase family. As to expression, leaves and roots. The levels found in the leaves are 25 times greater than in the roots.

The enzyme catalyses myo-inositol + S-adenosyl-L-methionine = 1D-4-O-methyl-myo-inositol + S-adenosyl-L-homocysteine + H(+). The protein operates within polyol metabolism; myo-inositol metabolism. Functionally, catalyzes the methylation of myo-inositol into ononitol (1D-4-O-methyl myo-inositol), the first step in the biosynthesis of the cyclic sugar pinitol which has osmoprotective properties. This Mesembryanthemum crystallinum (Common ice plant) protein is Inositol 4-methyltransferase (IMT1).